A 468-amino-acid chain; its full sequence is Uronate isomerase (468 aa).

This sequence belongs to the metallo-dependent hydrolases superfamily. Uronate isomerase family.

It carries out the reaction D-glucuronate = D-fructuronate. It catalyses the reaction aldehydo-D-galacturonate = keto-D-tagaturonate. It participates in carbohydrate metabolism; pentose and glucuronate interconversion. The chain is Uronate isomerase from Marinomonas sp. (strain MWYL1).